A 408-amino-acid chain; its full sequence is 3-ketoacyl-CoA thiolase A, peroxisomal (408 aa).

Cys-112 acts as the Acyl-thioester intermediate in catalysis. Residues His-366 and Cys-394 each act as proton acceptor in the active site.

This sequence belongs to the thiolase-like superfamily. Thiolase family. As to quaternary structure, homodimer.

The protein resides in the peroxisome. It carries out the reaction an acyl-CoA + acetyl-CoA = a 3-oxoacyl-CoA + CoA. The protein operates within lipid metabolism; fatty acid metabolism. This is 3-ketoacyl-CoA thiolase A, peroxisomal from Candida tropicalis (Yeast).